The primary structure comprises 242 residues: Ubiquinone biosynthesis O-methyltransferase (242 aa).

S-adenosyl-L-methionine is bound by residues Arg44, Gly64, Asp85, and Met129.

This sequence belongs to the methyltransferase superfamily. UbiG/COQ3 family.

It catalyses the reaction a 3-demethylubiquinol + S-adenosyl-L-methionine = a ubiquinol + S-adenosyl-L-homocysteine + H(+). The catalysed reaction is a 3-(all-trans-polyprenyl)benzene-1,2-diol + S-adenosyl-L-methionine = a 2-methoxy-6-(all-trans-polyprenyl)phenol + S-adenosyl-L-homocysteine + H(+). Its pathway is cofactor biosynthesis; ubiquinone biosynthesis. O-methyltransferase that catalyzes the 2 O-methylation steps in the ubiquinone biosynthetic pathway. In Yersinia enterocolitica serotype O:8 / biotype 1B (strain NCTC 13174 / 8081), this protein is Ubiquinone biosynthesis O-methyltransferase.